We begin with the raw amino-acid sequence, 180 residues long: MSTYEEEHGIQQNSRDYQEVGGTSQEEQRRQVRSQLQGLFQNFGNTSGEGDAHSDSTLLLRLLSQMLPESLQEEWLQEMDKGKSAGCPDTFAASLPRINKKKLKATDNCSICYTNYLEDEYPLVVELPHCHHKFDLECLSVWLSRSTTCPLCRDNVMGHRIINEIDTTEAELEEDWGMYG.

Residues 1–31 (MSTYEEEHGIQQNSRDYQEVGGTSQEEQRRQ) are disordered. S2 carries the post-translational modification N-acetylserine. Residues 109 to 153 (CSICYTNYLEDEYPLVVELPHCHHKFDLECLSVWLSRSTTCPLCR) form an RING-type zinc finger.

This is an uncharacterized protein from Saccharomyces cerevisiae (strain ATCC 204508 / S288c) (Baker's yeast).